Here is a 449-residue protein sequence, read N- to C-terminus: Sensor protein QseC (449 aa).

Topologically, residues 1-12 are cytoplasmic; sequence MKFTQRLSLRVR. A helical membrane pass occupies residues 13-33; it reads LTLIFLILASVTWLLSSFVAW. The Periplasmic segment spans residues 34 to 156; that stretch reads KQTTDNVDEL…QEWEYREDMA (123 aa). The helical transmembrane segment at 157 to 177 threads the bilayer; that stretch reads LAIVAGQLIPWLVALPVMLII. Residues 178-449 are Cytoplasmic-facing; sequence MMVLLGRELA…QGGFEAKVSW (272 aa). One can recognise a Histidine kinase domain in the interval 243–449; sequence DAAHELRSPL…QGGFEAKVSW (207 aa). Position 246 is a phosphohistidine; by autocatalysis (H246).

It localises to the cell inner membrane. The enzyme catalyses ATP + protein L-histidine = ADP + protein N-phospho-L-histidine.. Functionally, member of a two-component regulatory system QseB/QseC. Activates the flagella regulon by activating transcription of FlhDC. May activate QseB by phosphorylation. This is Sensor protein QseC (qseC) from Escherichia coli O157:H7.